The following is a 319-amino-acid chain: Probable casein kinase II subunit alpha homolog (319 aa).

Residues 37-316 (YQIYQRMGRG…ADECLRHPLF (280 aa)) enclose the Protein kinase domain. ATP contacts are provided by residues 43–51 (MGRGKYSEV) and lysine 64. The active-site Proton acceptor is aspartate 151.

Belongs to the protein kinase superfamily. Ser/Thr protein kinase family. CK2 subfamily. Tetramer composed of two alpha chains, one beta chain and one beta' chain.

It carries out the reaction L-seryl-[protein] + ATP = O-phospho-L-seryl-[protein] + ADP + H(+). The catalysed reaction is L-threonyl-[protein] + ATP = O-phospho-L-threonyl-[protein] + ADP + H(+). Catalytic subunit of a constitutively active serine/threonine-protein kinase complex that phosphorylates a large number of substrates containing acidic residues C-terminal to the phosphorylated serine or threonine. The protein is Probable casein kinase II subunit alpha homolog (CKA1) of Encephalitozoon cuniculi (strain GB-M1) (Microsporidian parasite).